We begin with the raw amino-acid sequence, 65 residues long: Large ribosomal subunit protein uL29 (65 aa).

Belongs to the universal ribosomal protein uL29 family.

In Paracidovorax citrulli (strain AAC00-1) (Acidovorax citrulli), this protein is Large ribosomal subunit protein uL29.